Consider the following 184-residue polypeptide: Protein Iojap-related, mitochondrial (184 aa).

A mitochondrion-targeting transit peptide spans 1-39; it reads MLTTLRSRCSSLLLNQSWKLAPNRIFASSPSFSSSAGIS.

This sequence belongs to the Iojap/RsfS family.

It is found in the mitochondrion. Functionally, may be a ribosome silencing factor involved in organelle biogenesis and required for germination. The protein is Protein Iojap-related, mitochondrial of Arabidopsis thaliana (Mouse-ear cress).